The primary structure comprises 439 residues: L-tryptophan decarboxylase (439 aa).

It belongs to the phosphatidylserine decarboxylase family.

It catalyses the reaction L-tryptophan + H(+) = tryptamine + CO2. The protein operates within secondary metabolite biosynthesis. In terms of biological role, L-tryptophan decarboxylase; part of the gene cluster that mediates the biosynthesis of psilocybin, a psychotropic tryptamine-derived natural product. The first step in the pathway is the decarboxylation of L-tryptophan to tryptamine by the decarboxylase psiD. PsiD does not decarboxylate phenylalanine, tyrosine, or 5-hydroxy- L -tryptophan (5-HTP). 4-hydroxy-L-tryptophan is accepted as substrate by psiD as well. The cytochrome P450 monooxygenase psiH then converts tryptamine to 4-hydroxytryptamine. The kinase psiK catalyzes the 4-O-phosphorylation step by converting 4-hydroxytryptamine into norbaeocystin. The methyltransferase psiM then catalyzes iterative methyl transfer to the amino group of norbaeocystin to yield psilocybin via a monomethylated intermediate, baeocystin. 4-hydroxy-6-methyl-l-tryptophancan also be converted the decarboxylase PsiD, kinase PsiK, and methyltransferase PsiM into respectively 6-methyl-norbaeocystin, 6-methylbaeocystin, and 6-methylpsilocybin. The protein is L-tryptophan decarboxylase of Psilocybe cyanescens.